Consider the following 164-residue polypeptide: Urocortin-3 (164 aa).

The N-terminal stretch at 1–23 (MLMPTYFLLPLLLLLGGPRTSLS) is a signal peptide. The propeptide occupies 24-121 (HKFYNTGPVF…PDKPKSDRGT (98 aa)). The disordered stretch occupies residues 58-120 (SFGHLPTQDP…YPDKPKSDRG (63 aa)). A compositionally biased stretch (basic and acidic residues) spans 110–120 (LYPDKPKSDRG). Ile160 carries the isoleucine amide modification.

This sequence belongs to the sauvagine/corticotropin-releasing factor/urotensin I family. Binds with high affinity to CRF receptors 2-alpha and 2-beta. As to expression, expressed in some areas of the brain including the hypothalamus, amygdala, and brainstem, but is not evident in the cerebellum, pituitary, or cerebral cortex; it is also expressed peripherally in small intestine and skin.

Its subcellular location is the secreted. Suppresses food intake, delays gastric emptying and decreases heat-induced edema. Might represent an endogenous ligand for maintaining homeostasis after stress. This Mus musculus (Mouse) protein is Urocortin-3 (Ucn3).